Here is a 128-residue protein sequence, read N- to C-terminus: Azurin (128 aa).

A Plastocyanin-like domain is found at Ala1–Lys128. Residues His46, Cys112, His117, and Met121 each coordinate Cu cation.

It is found in the periplasm. Its function is as follows. Transfers electrons from cytochrome c551 to cytochrome oxidase. The chain is Azurin from Pseudomonas denitrificans.